The primary structure comprises 816 residues: Probable E3 ubiquitin-protein ligase hulA (816 aa).

Positions 1-112 (MGSNLPAQPN…QMGGDEMLTR (112 aa)) constitute a C2 domain. Disordered regions lie at residues 134–238 (NLST…WERR) and 253–353 (RTTT…YFVD). Polar residues-rich tracts occupy residues 151-168 (MQPSTSSGLVPQVSASTP), 177-202 (ADPTASNPSLHPQRVPSTTRPSSTIV), 217-226 (SRTNLSSFED), and 253-270 (RTTTWTRPSNNYNEQTSR). One can recognise a WW 1 domain in the interval 229–262 (GRLPAGWERREDNLGRTYYVDHNTRTTTWTRPSN). A compositionally biased stretch (basic and acidic residues) spans 279 to 294 (LERRAHQSRMLPEDRT). Residues 295–309 (GASSPNLQENQQQAQ) show a composition bias toward polar residues. Residues 310–333 (TPPAGGSASAVSMMATGATTAGTG) show a composition bias toward low complexity. WW domains lie at 333–366 (GELPPGWEQRTTPEGRPYFVDHNTRTTTWVDPRR) and 393–426 (GPLPSGWEMRLTNTARVYFVDHNTKTTTWDDPRL). The 335-residue stretch at 482 to 816 (SASDLKKRLM…VEETLGFGQE (335 aa)) folds into the HECT domain. The Glycyl thioester intermediate role is filled by C784.

It belongs to the RSP5/NEDD4 family. Interacts with creD.

The protein localises to the cytoplasm. It carries out the reaction S-ubiquitinyl-[E2 ubiquitin-conjugating enzyme]-L-cysteine + [acceptor protein]-L-lysine = [E2 ubiquitin-conjugating enzyme]-L-cysteine + N(6)-ubiquitinyl-[acceptor protein]-L-lysine.. The protein operates within protein modification; protein ubiquitination. In terms of biological role, E3 ubiquitin-protein ligase which accepts ubiquitin from an E2 ubiquitin-conjugating enzyme in the form of a thioester and then directly transfers the ubiquitin to targeted substrates. Probably involved in the regulatory network controlling carbon source utilization. The sequence is that of Probable E3 ubiquitin-protein ligase hulA (hulA) from Aspergillus oryzae (strain ATCC 42149 / RIB 40) (Yellow koji mold).